A 361-amino-acid chain; its full sequence is Putative agmatine deiminase (361 aa).

The active-site Amidino-cysteine intermediate is the cysteine 354.

Belongs to the agmatine deiminase family.

It catalyses the reaction agmatine + H2O = N-carbamoylputrescine + NH4(+). The sequence is that of Putative agmatine deiminase from Streptococcus pneumoniae (strain Taiwan19F-14).